Reading from the N-terminus, the 180-residue chain is Inner membrane-spanning protein YciB (180 aa).

Helical transmembrane passes span 4–24 (LLSE…GGGI), 25–45 (QHAT…CYVI), 49–69 (VSKL…ITLI), 76–96 (IKIK…MSGI), 118–138 (ITLS…NEVV), and 150–170 (FKVF…LPLL).

Belongs to the YciB family.

Its subcellular location is the cell inner membrane. Plays a role in cell envelope biogenesis, maintenance of cell envelope integrity and membrane homeostasis. The sequence is that of Inner membrane-spanning protein YciB from Rickettsia africae (strain ESF-5).